A 337-amino-acid chain; its full sequence is Phosphate acyltransferase (337 aa).

This sequence belongs to the PlsX family. Homodimer. Probably interacts with PlsY.

It localises to the cytoplasm. It catalyses the reaction a fatty acyl-[ACP] + phosphate = an acyl phosphate + holo-[ACP]. It functions in the pathway lipid metabolism; phospholipid metabolism. Functionally, catalyzes the reversible formation of acyl-phosphate (acyl-PO(4)) from acyl-[acyl-carrier-protein] (acyl-ACP). This enzyme utilizes acyl-ACP as fatty acyl donor, but not acyl-CoA. This is Phosphate acyltransferase from Aquifex aeolicus (strain VF5).